The primary structure comprises 190 residues: Vexin (190 aa).

The disordered stretch occupies residues 88–156; the sequence is AEKKASRFSR…DEATLPLTAH (69 aa). Over residues 117–133 the composition is skewed to polar residues; the sequence is TDKQNAPTVPASPSSYE. A compositionally biased stretch (basic and acidic residues) spans 136-149; it reads GCREQRPENPKDEA.

The protein belongs to the vexin family. As to expression, expressed in differentiating progenitors in the developing central nervous system (CNS).

Its subcellular location is the cell membrane. The protein localises to the nucleus. Functionally, required for neurogenesis in the neural plate and retina. Cooperates with cell cycle inhibitor cdknx/p27(xic1) to enhance neurogenesis and increase the levels of the neuronal determination factor neurog2/X-ngngr-1. The protein is Vexin of Xenopus laevis (African clawed frog).